We begin with the raw amino-acid sequence, 836 residues long: Subtilisin-like protease PIMMS2 (836 aa).

Residues D155, H222, and S414 each act as charge relay system in the active site. The disordered stretch occupies residues 802 to 836; sequence EKKNKYNNSVLKRNEMKSHNNSQKTPKIIPRKYSR.

The protein belongs to the peptidase S8 family.

The protein localises to the cell membrane. It carries out the reaction Hydrolysis of proteins with broad specificity for peptide bonds, and a preference for a large uncharged residue in P1. Hydrolyzes peptide amides.. In terms of biological role, probable serine protease which plays a role in ookinete traversal of the mosquito host midgut epithelium. The sequence is that of Subtilisin-like protease PIMMS2 from Plasmodium berghei (strain Anka).